Here is a 346-residue protein sequence, read N- to C-terminus: S-adenosylmethionine:tRNA ribosyltransferase-isomerase (346 aa).

Belongs to the QueA family. Monomer.

It localises to the cytoplasm. It catalyses the reaction 7-aminomethyl-7-carbaguanosine(34) in tRNA + S-adenosyl-L-methionine = epoxyqueuosine(34) in tRNA + adenine + L-methionine + 2 H(+). It functions in the pathway tRNA modification; tRNA-queuosine biosynthesis. Functionally, transfers and isomerizes the ribose moiety from AdoMet to the 7-aminomethyl group of 7-deazaguanine (preQ1-tRNA) to give epoxyqueuosine (oQ-tRNA). This is S-adenosylmethionine:tRNA ribosyltransferase-isomerase from Nitrosomonas eutropha (strain DSM 101675 / C91 / Nm57).